Consider the following 86-residue polypeptide: Anti-adapter protein IraP (86 aa).

Positions 1–36 (MKNLIAELLLKLAQKEEESKELVAQVEALEIIVTAM) form a coiled coil.

It belongs to the IraP family. In terms of assembly, interacts with RssB.

Its subcellular location is the cytoplasm. In terms of biological role, inhibits RpoS proteolysis by regulating RssB activity, thereby increasing the stability of the sigma stress factor RpoS especially during phosphate and magnesium starvation, but also in stationary phase and during nitrogen starvation. Its effect on RpoS stability is due to its interaction with RssB, which probably blocks the interaction of RssB with RpoS, and the consequent delivery of the RssB-RpoS complex to the ClpXP protein degradation pathway. In Salmonella choleraesuis (strain SC-B67), this protein is Anti-adapter protein IraP.